The following is a 122-amino-acid chain: Small ribosomal subunit protein uS13 (122 aa).

Positions 98-116 are enriched in basic residues; sequence VRGQKTKTNARTRKGRRKT. Positions 98 to 122 are disordered; sequence VRGQKTKTNARTRKGRRKTVGAATK.

This sequence belongs to the universal ribosomal protein uS13 family. Part of the 30S ribosomal subunit. Forms a loose heterodimer with protein S19. Forms two bridges to the 50S subunit in the 70S ribosome.

In terms of biological role, located at the top of the head of the 30S subunit, it contacts several helices of the 16S rRNA. In the 70S ribosome it contacts the 23S rRNA (bridge B1a) and protein L5 of the 50S subunit (bridge B1b), connecting the 2 subunits; these bridges are implicated in subunit movement. Contacts the tRNAs in the A and P-sites. This Campylobacter fetus subsp. fetus (strain 82-40) protein is Small ribosomal subunit protein uS13.